Here is a 110-residue protein sequence, read N- to C-terminus: Large ribosomal subunit protein uL22 (110 aa).

It belongs to the universal ribosomal protein uL22 family. Part of the 50S ribosomal subunit.

Functionally, this protein binds specifically to 23S rRNA; its binding is stimulated by other ribosomal proteins, e.g. L4, L17, and L20. It is important during the early stages of 50S assembly. It makes multiple contacts with different domains of the 23S rRNA in the assembled 50S subunit and ribosome. Its function is as follows. The globular domain of the protein is located near the polypeptide exit tunnel on the outside of the subunit, while an extended beta-hairpin is found that lines the wall of the exit tunnel in the center of the 70S ribosome. The sequence is that of Large ribosomal subunit protein uL22 from Campylobacter fetus subsp. fetus (strain 82-40).